Reading from the N-terminus, the 343-residue chain is Protein RecA (343 aa).

64-71 (GPESSGKT) serves as a coordination point for ATP.

This sequence belongs to the RecA family.

It is found in the cytoplasm. Its function is as follows. Can catalyze the hydrolysis of ATP in the presence of single-stranded DNA, the ATP-dependent uptake of single-stranded DNA by duplex DNA, and the ATP-dependent hybridization of homologous single-stranded DNAs. It interacts with LexA causing its activation and leading to its autocatalytic cleavage. In Acidiphilium cryptum (strain JF-5), this protein is Protein RecA.